The primary structure comprises 73 residues: Large ribosomal subunit protein bL31 (73 aa).

Residues Cys16, Cys18, Cys37, and Cys40 each contribute to the Zn(2+) site.

This sequence belongs to the bacterial ribosomal protein bL31 family. Type A subfamily. As to quaternary structure, part of the 50S ribosomal subunit. The cofactor is Zn(2+).

Binds the 23S rRNA. The chain is Large ribosomal subunit protein bL31 from Pseudomonas savastanoi pv. phaseolicola (strain 1448A / Race 6) (Pseudomonas syringae pv. phaseolicola (strain 1448A / Race 6)).